The primary structure comprises 219 residues: Large ribosomal subunit protein bL25 (219 aa).

The tract at residues 194–219 (SSTELEETPEVPASAVPTTDQGESAE) is disordered. Residues 209 to 219 (VPTTDQGESAE) are compositionally biased toward polar residues.

The protein belongs to the bacterial ribosomal protein bL25 family. CTC subfamily. Part of the 50S ribosomal subunit; part of the 5S rRNA/L5/L18/L25 subcomplex. Contacts the 5S rRNA. Binds to the 5S rRNA independently of L5 and L18.

Its function is as follows. This is one of the proteins that binds to the 5S RNA in the ribosome where it forms part of the central protuberance. The protein is Large ribosomal subunit protein bL25 of Legionella pneumophila (strain Paris).